A 360-amino-acid polypeptide reads, in one-letter code: Phospho-N-acetylmuramoyl-pentapeptide-transferase (360 aa).

Transmembrane regions (helical) follow at residues 25 to 45, 74 to 94, 97 to 117, 134 to 154, 168 to 188, 199 to 219, 236 to 256, 263 to 283, 288 to 308, and 339 to 359; these read RAIL…PWVI, MGGA…SDFG, YVWV…VDDY, YFWQ…TAQA, VALN…VGTS, GLAI…AYLA, AGEL…FLWF, VFMG…VAVI, FVLF…ILQV, and IVRF…TLKF.

This sequence belongs to the glycosyltransferase 4 family. MraY subfamily. The cofactor is Mg(2+).

It localises to the cell inner membrane. It carries out the reaction UDP-N-acetyl-alpha-D-muramoyl-L-alanyl-gamma-D-glutamyl-meso-2,6-diaminopimeloyl-D-alanyl-D-alanine + di-trans,octa-cis-undecaprenyl phosphate = di-trans,octa-cis-undecaprenyl diphospho-N-acetyl-alpha-D-muramoyl-L-alanyl-D-glutamyl-meso-2,6-diaminopimeloyl-D-alanyl-D-alanine + UMP. Its pathway is cell wall biogenesis; peptidoglycan biosynthesis. Functionally, catalyzes the initial step of the lipid cycle reactions in the biosynthesis of the cell wall peptidoglycan: transfers peptidoglycan precursor phospho-MurNAc-pentapeptide from UDP-MurNAc-pentapeptide onto the lipid carrier undecaprenyl phosphate, yielding undecaprenyl-pyrophosphoryl-MurNAc-pentapeptide, known as lipid I. This is Phospho-N-acetylmuramoyl-pentapeptide-transferase from Cellvibrio japonicus (strain Ueda107) (Pseudomonas fluorescens subsp. cellulosa).